The primary structure comprises 168 residues: MNSKGQYPTQPTYPVQPPGNPVYPQTLHLPQAPPYTDAPPAYSELYRPSFVHPGAATVPTMSAAFPGASLYLPMAQSVAVGPLGSTIPMAYYPVGPIYPPGSAVLVEGGYDAGARFGAGATAGNIPPPPPGCPPNAAQLAVMQGANVLVTQRKGNFFMGGSDGGYTIW.

Residues 1-13 (MNSKGQYPTQPTY) are compositionally biased toward low complexity. Residues 1 to 25 (MNSKGQYPTQPTYPVQPPGNPVYPQ) form a disordered region. A PPAY motif is present at residues 39 to 42 (PPAY). Ser77 is subject to Phosphoserine.

As to quaternary structure, interacts with SOX6. Interacts with DAZ1 and DAZL. Interacts with IL17RB. May interact with FAM168B. Interacts with INCA1. Interacts with EIF4G1 and EIF4G2. Interacts (via PPAY motif) with NEDD4 (via WW domains). Interacts with transcription factor TCF4; the interaction results in localization of DAZAP2 to the nucleus. Interacts with transcription factors TCF7 and TCF7L1. Interacts with transcription factor LEF1. Interacts with serine/threonine-protein kinase HIPK2; the interaction results in phosphorylation of DAZAP2 which causes localization of DAZAP2 to the nucleus, reduces interaction of DAZAP2 with HIPK2 and prevents DAZAP2-dependent degradation of HIPK2. Interacts with ubiquitin ligase SIAH1; the interaction is decreased following phosphorylation of DAZAP2 by HIPK2. Interacts with TP53; the interaction is triggered by DNA damage. In terms of processing, ubiquitinated by SMURF2, leading to proteasomal degradation. Ubiquitinated by NEDD4, leading to proteasomal degradation. Following DNA damage, phosphorylated by HIPK2 which promotes DAZAP2 localization to the nucleus, reduces interaction of DAZAP2 with HIPK2 and SIAH1, and prevents DAZAP2-dependent ubiquitination of HIPK2 by E3 ubiquitin-protein ligase SIAH1 and subsequent HIPK2 proteasomal degradation. In terms of tissue distribution, widely expressed. Highly expressed in brain.

Its subcellular location is the cytoplasm. The protein resides in the nucleus. The protein localises to the nucleus speckle. It localises to the nuclear body. It is found in the stress granule. In unstressed cells, promotes SIAH1-mediated polyubiquitination and degradation of the serine/threonine-protein kinase HIPK2, probably by acting as a loading factor that potentiates complex formation between HIPK2 and ubiquitin ligase SIAH1. In response to DNA damage, localizes to the nucleus following phosphorylation by HIPK2 and modulates the expression of a subset of TP53/p53 target genes by binding to TP53 at target gene promoters. This limits the expression of a number of cell death-mediating TP53 target genes, reducing DNA damage-induced cell death. Enhances the binding of transcription factor TCF7L2/TCF4, a Wnt signaling pathway effector, to the promoters of target genes. Plays a role in stress granule formation. The chain is DAZ-associated protein 2 (Dazap2) from Mus musculus (Mouse).